The sequence spans 663 residues: Zinc finger protein 44 (663 aa).

In terms of domain architecture, KRAB spans 52–138 (VAFEDVAVNF…GETLSQIRNS (87 aa)). The C2H2-type 1; atypical zinc-finger motif lies at 189-211 (YTHKQCGKGLSYRHSFQTCERPH). The C2H2-type 2; degenerate zinc finger occupies 217-239 (YDCKECGKTFSSPGNLRRHMVVK). 15 consecutive C2H2-type zinc fingers follow at residues 245–267 (YKCE…ERTH), 273–295 (YECK…EKIH), 301–323 (YECK…ERTH), 329–351 (YKCK…ERIH), 357–379 (YTCK…MIMH), 385–407 (HKCK…EGTH), 413–435 (YECK…MMAH), 441–463 (HKCT…ERTH), 469–491 (YECK…ETTH), 497–518 (YKCK…ETTH), 524–546 (YECK…ERTH), 552–574 (YECQ…ERTH), 580–602 (YECK…ERTH), 608–630 (YECK…ERTH), and 636–658 (YECK…KRTH).

This sequence belongs to the krueppel C2H2-type zinc-finger protein family.

Its subcellular location is the nucleus. May be involved in transcriptional regulation. This Homo sapiens (Human) protein is Zinc finger protein 44 (ZNF44).